A 244-amino-acid polypeptide reads, in one-letter code: DNA repair protein RecO (244 aa).

Belongs to the RecO family.

Involved in DNA repair and RecF pathway recombination. The protein is DNA repair protein RecO of Caldicellulosiruptor bescii (strain ATCC BAA-1888 / DSM 6725 / KCTC 15123 / Z-1320) (Anaerocellum thermophilum).